Reading from the N-terminus, the 1938-residue chain is Myosin-1 (1938 aa).

Residues 33 to 82 form the Myosin N-terminal SH3-like domain; it reads DAKTSVFVADPKESFVKATVQSREGGKVTAKTEAGATVTVKEDQVFPMNP. Phosphothreonine is present on residues Thr64 and Thr69. Positions 86–781 constitute a Myosin motor domain; that stretch reads DKIEDMAMMT…LLGLLEEMRD (696 aa). The residue at position 130 (Lys130) is an N6,N6,N6-trimethyllysine. Position 179–186 (179–186) interacts with ATP; that stretch reads GESGAGKT. Position 389 is a phosphotyrosine (Tyr389). The residue at position 419 (Thr419) is a Phosphothreonine. Tyr424 is subject to Phosphotyrosine. Ser625 is subject to Phosphoserine. The actin-binding stretch occupies residues 658–680; the sequence is LNKLMTNLRSTHPHFVRCIIPNE. His756 carries the post-translational modification Pros-methylhistidine. The interval 760–774 is actin-binding; the sequence is KFGHTKVFFKAGLLG. Residues 784-813 form the IQ domain; it reads LAQLITRTQARCRGFLARVEYQKMVERRES. The stretch at 842-1938 forms a coiled coil; that stretch reads LLKSAETEKE…EVHTKIISEE (1097 aa). 2 positions are modified to phosphoserine: Ser1091 and Ser1095. Disordered stretches follow at residues 1124 to 1146 and 1152 to 1171; these read EIEA…SREL and RLEE…KKRE. Over residues 1127–1146 the composition is skewed to basic and acidic residues; that stretch reads AERASRAKAEKQRSDLSREL. Residues Ser1161 and Ser1236 each carry the phosphoserine modification. At Thr1240 the chain carries Phosphothreonine. Phosphoserine occurs at positions 1242 and 1260. Residues Thr1264 and Thr1285 each carry the phosphothreonine modification. Residues Ser1287, Ser1291, Ser1302, and Ser1305 each carry the phosphoserine modification. Phosphotyrosine is present on Tyr1463. Thr1466 bears the Phosphothreonine mark. Residue Ser1473 is modified to Phosphoserine. Position 1491 is a phosphotyrosine (Tyr1491). Ser1494 is modified (phosphoserine). Thr1500 bears the Phosphothreonine mark. The residue at position 1513 (Ser1513) is a Phosphoserine. A Phosphothreonine modification is found at Thr1516. 7 positions are modified to phosphoserine: Ser1541, Ser1553, Ser1573, Ser1599, Ser1602, Ser1713, and Ser1725. Phosphothreonine is present on residues Thr1729 and Thr1735.

Belongs to the TRAFAC class myosin-kinesin ATPase superfamily. Myosin family. Muscle myosin is a hexameric protein that consists of 2 heavy chain subunits (MHC), 2 alkali light chain subunits (MLC) and 2 regulatory light chain subunits (MLC-2). Interacts with SLC26A5.

It is found in the cytoplasm. The protein localises to the myofibril. In terms of biological role, required for normal hearing. It plays a role in cochlear amplification of auditory stimuli, likely through the positive regulation of prestin (SLC26A5) activity and outer hair cell (OHC) electromotility. The protein is Myosin-1 (MYH1) of Bos taurus (Bovine).